Consider the following 269-residue polypeptide: Imidazole glycerol phosphate synthase subunit HisF (269 aa).

Residues D23 and D142 contribute to the active site.

The protein belongs to the HisA/HisF family. As to quaternary structure, heterodimer of HisH and HisF.

Its subcellular location is the cytoplasm. The catalysed reaction is 5-[(5-phospho-1-deoxy-D-ribulos-1-ylimino)methylamino]-1-(5-phospho-beta-D-ribosyl)imidazole-4-carboxamide + L-glutamine = D-erythro-1-(imidazol-4-yl)glycerol 3-phosphate + 5-amino-1-(5-phospho-beta-D-ribosyl)imidazole-4-carboxamide + L-glutamate + H(+). It functions in the pathway amino-acid biosynthesis; L-histidine biosynthesis; L-histidine from 5-phospho-alpha-D-ribose 1-diphosphate: step 5/9. IGPS catalyzes the conversion of PRFAR and glutamine to IGP, AICAR and glutamate. The HisF subunit catalyzes the cyclization activity that produces IGP and AICAR from PRFAR using the ammonia provided by the HisH subunit. In Bordetella pertussis (strain Tohama I / ATCC BAA-589 / NCTC 13251), this protein is Imidazole glycerol phosphate synthase subunit HisF.